Here is a 176-residue protein sequence, read N- to C-terminus: MSETPTSPNQDLPEAPQAGPLSQWLTSQGFDHQILGNDHLGIERLGVEPLALPLVATALKSKGFDYLQVQGGFDQGPGEPLVSFYHLVQVGGSDGASTAEVRLEVSLARDGDLTVPSLYPLFRGADWQERETFDLFGINYSGHPHPKRLLMPEDWVGYPLRKDYVQPDFYELQDAY.

Polar residues predominate over residues 1-10 (MSETPTSPNQ). The segment at 1–22 (MSETPTSPNQDLPEAPQAGPLS) is disordered.

The protein belongs to the complex I 30 kDa subunit family. In terms of assembly, NDH-1 can be composed of about 15 different subunits; different subcomplexes with different compositions have been identified which probably have different functions.

It is found in the cellular thylakoid membrane. It catalyses the reaction a plastoquinone + NADH + (n+1) H(+)(in) = a plastoquinol + NAD(+) + n H(+)(out). The enzyme catalyses a plastoquinone + NADPH + (n+1) H(+)(in) = a plastoquinol + NADP(+) + n H(+)(out). In terms of biological role, NDH-1 shuttles electrons from an unknown electron donor, via FMN and iron-sulfur (Fe-S) centers, to quinones in the respiratory and/or the photosynthetic chain. The immediate electron acceptor for the enzyme in this species is believed to be plastoquinone. Couples the redox reaction to proton translocation, and thus conserves the redox energy in a proton gradient. Cyanobacterial NDH-1 also plays a role in inorganic carbon-concentration. The protein is NAD(P)H-quinone oxidoreductase subunit J of Synechococcus sp. (strain RCC307).